A 249-amino-acid polypeptide reads, in one-letter code: tRNA pseudouridine synthase A (249 aa).

Residue Asp-52 is the Nucleophile of the active site. Position 111 (Tyr-111) interacts with substrate.

Belongs to the tRNA pseudouridine synthase TruA family. As to quaternary structure, homodimer.

The catalysed reaction is uridine(38/39/40) in tRNA = pseudouridine(38/39/40) in tRNA. In terms of biological role, formation of pseudouridine at positions 38, 39 and 40 in the anticodon stem and loop of transfer RNAs. The chain is tRNA pseudouridine synthase A from Caulobacter sp. (strain K31).